The primary structure comprises 62 residues: Small ribosomal subunit protein uS14 (62 aa).

Zn(2+)-binding residues include cysteine 25, cysteine 28, cysteine 41, and cysteine 44.

It belongs to the universal ribosomal protein uS14 family. Zinc-binding uS14 subfamily. Part of the 30S ribosomal subunit. Contacts proteins S3 and S10. Zn(2+) is required as a cofactor.

In terms of biological role, binds 16S rRNA, required for the assembly of 30S particles and may also be responsible for determining the conformation of the 16S rRNA at the A site. The protein is Small ribosomal subunit protein uS14 of Sulfurihydrogenibium sp. (strain YO3AOP1).